Here is a 640-residue protein sequence, read N- to C-terminus: Chaperone protein DnaK (640 aa).

Phosphothreonine; by autocatalysis is present on threonine 196. A compositionally biased stretch (basic and acidic residues) spans 547 to 569 (GDKIPSDKRPALEGALEKLKDAT). Disordered stretches follow at residues 547–575 (GDKIPSDKRPALEGALEKLKDATKNGTTE) and 595–640 (LYQA…GNGK). The span at 603-615 (TNASEPTQNTDGS) shows a compositional bias: polar residues. Residues 625-634 (GEVENAEFEV) show a composition bias toward acidic residues.

Belongs to the heat shock protein 70 family.

Its function is as follows. Acts as a chaperone. The chain is Chaperone protein DnaK from Chlorobium phaeobacteroides (strain DSM 266 / SMG 266 / 2430).